We begin with the raw amino-acid sequence, 931 residues long: Isoleucine--tRNA ligase (931 aa).

Residues 57–67 carry the 'HIGH' region motif; it reads PYANGNIHIGH. Position 555 (glutamate 555) interacts with L-isoleucyl-5'-AMP. The 'KMSKS' region motif lies at 596–600; the sequence is KMSKS. Residue lysine 599 participates in ATP binding. Cysteine 890, cysteine 893, cysteine 910, and cysteine 913 together coordinate Zn(2+).

The protein belongs to the class-I aminoacyl-tRNA synthetase family. IleS type 1 subfamily. In terms of assembly, monomer. Zn(2+) serves as cofactor.

It is found in the cytoplasm. It carries out the reaction tRNA(Ile) + L-isoleucine + ATP = L-isoleucyl-tRNA(Ile) + AMP + diphosphate. Functionally, catalyzes the attachment of isoleucine to tRNA(Ile). As IleRS can inadvertently accommodate and process structurally similar amino acids such as valine, to avoid such errors it has two additional distinct tRNA(Ile)-dependent editing activities. One activity is designated as 'pretransfer' editing and involves the hydrolysis of activated Val-AMP. The other activity is designated 'posttransfer' editing and involves deacylation of mischarged Val-tRNA(Ile). The chain is Isoleucine--tRNA ligase from Limosilactobacillus reuteri subsp. reuteri (strain JCM 1112) (Lactobacillus reuteri).